The following is a 282-amino-acid chain: tRNA uridine(34) hydroxylase (282 aa).

Residues 128-222 (EGRPVVMLDT…YFEEVGGSHY (95 aa)) enclose the Rhodanese domain. C182 acts as the Cysteine persulfide intermediate in catalysis.

Belongs to the TrhO family.

The catalysed reaction is uridine(34) in tRNA + AH2 + O2 = 5-hydroxyuridine(34) in tRNA + A + H2O. Catalyzes oxygen-dependent 5-hydroxyuridine (ho5U) modification at position 34 in tRNAs. In Cupriavidus taiwanensis (strain DSM 17343 / BCRC 17206 / CCUG 44338 / CIP 107171 / LMG 19424 / R1) (Ralstonia taiwanensis (strain LMG 19424)), this protein is tRNA uridine(34) hydroxylase.